The sequence spans 501 residues: Dipeptide and tripeptide permease A (501 aa).

Residues 1 to 34 (MSTANNNQPESISMNAFKQPKAFYLIFSIELWER) are Cytoplasmic-facing. Residues 35–55 (FGYYGLQGIMAVYLVKMLGMS) traverse the membrane as a helical segment. The Periplasmic portion of the chain corresponds to 56-59 (EADS). A helical membrane pass occupies residues 60–80 (ITLFSSFSALVYGFVAIGGWL). At 81–89 (GDKVLGAKR) the chain is on the cytoplasmic side. The next 2 membrane-spanning stretches (helical) occupy residues 90 to 110 (VIVL…YSGH) and 111 to 131 (EIFW…LFKA). Residues 132 to 153 (NPSSLLSTCYSKDDPRLDGAFT) lie on the Periplasmic side of the membrane. The chain crosses the membrane as a helical span at residues 154–174 (MYYMSINIGSFFSMLATPWLA). Residues 175–178 (AKYG) lie on the Cytoplasmic side of the membrane. Residues 179–199 (WSVAFSLSVVGMLITLVNFWF) form a helical membrane-spanning segment. Residues 200-220 (CRKWVKNQGSKPDFLPLQFKK) are Periplasmic-facing. A helical membrane pass occupies residues 221–241 (LLMVLVGIIALITLSNWLLHN). The Cytoplasmic segment spans residues 242–246 (QIIAR). Residues 247–267 (WALALVSLGIIFIFTKETLFL) form a helical membrane-spanning segment. Over 268 to 274 (QGIARRR) the chain is Periplasmic. A helical membrane pass occupies residues 275–295 (MIVAFLLMLEAVIFFVLYSQM). Topologically, residues 296–320 (PTSLNFFAIHNVEHSIFGIGFEPEQ) are cytoplasmic. The chain crosses the membrane as a helical span at residues 321–341 (FQALNPFWIMLASPILAAIYN). The Periplasmic segment spans residues 342–352 (KMGDRLPMPHK). The chain crosses the membrane as a helical span at residues 353–373 (FAFGMMLCSAAFLVLPWGASF). Residues 374–383 (ANEHGIVSVN) lie on the Cytoplasmic side of the membrane. A helical membrane pass occupies residues 384–404 (WLILSYALQSIGELMISGLGL). At 405–414 (AMVAQLVPQR) the chain is on the periplasmic side. The chain crosses the membrane as a helical span at residues 415–435 (LMGFIMGSWFLTTAAAALIAG). At 436–460 (KVAALTAVPSDAITDAHASLAIYSH) the chain is on the cytoplasmic side. The chain crosses the membrane as a helical span at residues 461–481 (VFMQIGIVTAIIAVLMMLTAP). Over 482–501 (KLYRMTLAPSDHNDVKIMTQ) the chain is Periplasmic.

Belongs to the major facilitator superfamily. Proton-dependent oligopeptide transporter (POT/PTR) (TC 2.A.17) family. DtpA subfamily.

The protein localises to the cell inner membrane. In terms of biological role, proton-dependent permease that transports di- and tripeptides. The sequence is that of Dipeptide and tripeptide permease A from Yersinia pestis.